A 168-amino-acid chain; its full sequence is Transcriptional regulator MraZ (168 aa).

SpoVT-AbrB domains are found at residues 8–51 and 90–140; these read EYNQ…GGDR and ALNM…KADT.

The protein belongs to the MraZ family. Forms oligomers.

The protein localises to the cytoplasm. It localises to the nucleoid. The sequence is that of Transcriptional regulator MraZ from Cereibacter sphaeroides (strain ATCC 17025 / ATH 2.4.3) (Rhodobacter sphaeroides).